Consider the following 425-residue polypeptide: Probable proline--tRNA ligase, mitochondrial (425 aa).

Belongs to the class-II aminoacyl-tRNA synthetase family.

The protein resides in the mitochondrion. It carries out the reaction tRNA(Pro) + L-proline + ATP = L-prolyl-tRNA(Pro) + AMP + diphosphate. This Schizosaccharomyces pombe (strain 972 / ATCC 24843) (Fission yeast) protein is Probable proline--tRNA ligase, mitochondrial.